Reading from the N-terminus, the 105-residue chain is Protein LBH (105 aa).

In terms of domain architecture, LBH spans 18–104 (MTEVMMNTQP…CEETAKENKE (87 aa)). Residue S63 is modified to Phosphoserine. Acidic residues predominate over residues 86-96 (LVQEDEQDNCE). The tract at residues 86–105 (LVQEDEQDNCEETAKENKEQ) is disordered.

Belongs to the LBH family. As to expression, highly expressed in heart, and expressed at low levels in placenta, lung, skeletal muscle, kidney and liver.

It is found in the nucleus. Its subcellular location is the cytoplasm. In terms of biological role, transcriptional activator which may act in mitogen-activated protein kinase signaling pathway. The chain is Protein LBH from Homo sapiens (Human).